Reading from the N-terminus, the 458-residue chain is Serine protease Do-like HtrB (458 aa).

The span at 1 to 18 shows a compositional bias: basic and acidic residues; the sequence is MDYRRDGQNDQHQTEPSH. A disordered region spans residues 1 to 42; it reads MDYRRDGQNDQHQTEPSHTEQQNTENQKLIGHSEQELLDAPV. Residues 1–71 are Cytoplasmic-facing; the sequence is MDYRRDGQND…TAVKKEKKRR (71 aa). Residues 72–92 form a helical membrane-spanning segment; sequence AAWLSPILGGIIGGGLMLGIA. The Extracellular segment spans residues 93–458; sequence PYLPSDQNQA…LTKQTESSSS (366 aa). Residues 146–170 are disordered; that stretch reads QTSQNNTFGTGGGSSSESESGTGSG. Active-site charge relay system residues include His187, Asp217, and Ser298. Substrate-binding positions include 296 to 298 and 352 to 356; these read GNS and LGVQM. The 85-residue stretch at 356-440 folds into the PDZ domain; the sequence is MIDMSQVPET…KTTIQVLRKG (85 aa).

The protein belongs to the peptidase S1C family.

The protein localises to the cell membrane. The catalysed reaction is Acts on substrates that are at least partially unfolded. The cleavage site P1 residue is normally between a pair of hydrophobic residues, such as Val-|-Val.. Degrades abnormal exported proteins and responsible for the propeptide processing of a natural pro-protein and for the maturation of a native protein. It also plays a prominent role in stress (heat shock, ethanol, puromycin and NaCl) resistance during active exponential growth. The sequence is that of Serine protease Do-like HtrB (htrB) from Bacillus subtilis (strain 168).